Reading from the N-terminus, the 109-residue chain is UPF0154 protein UPA3_0273 (109 aa).

A helical transmembrane segment spans residues 42 to 62 (VGLGIGIVLFLIAGLIIGYFI).

This sequence belongs to the UPF0154 family.

The protein resides in the cell membrane. In Ureaplasma parvum serovar 3 (strain ATCC 27815 / 27 / NCTC 11736), this protein is UPF0154 protein UPA3_0273.